The following is a 513-amino-acid chain: MVILPSELIGATIIYIIVYIIIQKLIATGSWRRRRLPPGPEGWPVIGALPLLGGMPHVALAKMAKKYGPIMYLKVGTCGMVVASTPNAAKAFLKTLDINFSNRPPNAGATHMAYNAQDMVFAPYGPRWKLLRKLSNLHMLGGKALENWANVRANELGHMLKSMFDASHVGERIVVADMLTFAMANMIGQVMLSKRVFVEKGKEVNEFKNMVVELMTVAGYFNIGDFIPQIAWMDLQGIEKGMKKLHKKFDDLLTKMFEEHEATSNERKGKPDFLDFIMANRDNSEGERLSITNIKALLLNLFTAGTDTSSSVIEWALTEMMKNPTIFKKAQQEMDQIIGKNRRFIESDIPNLPYLRAICKEAFRKHPSTPLNLPRVSSDACTIDGYYIPKNTRLSVNIWAIGRDPDVWENPLEFIPERFLSEKNAKIEHRGNDFELIPFGAGRRICAGTRMGIVMVEYILGTLIHSFDWKLPNDVVDINMEETFGLALQKAVPLEAIVTPRLSFDIYQSSEPF.

Cysteine 446 lines the heme pocket.

It belongs to the cytochrome P450 family. Heme is required as a cofactor. Hypocotyl tissues.

It carries out the reaction a 3',5'-unsubstituted flavanone + 2 reduced [NADPH--hemoprotein reductase] + 2 O2 = a 3',5'-dihydroxyflavanone + 2 oxidized [NADPH--hemoprotein reductase] + 2 H2O + 2 H(+). The protein operates within pigment biosynthesis; anthocyanin biosynthesis. Its function is as follows. Catalyzes the 3'5'-hydroxylation of naringenin and eriodictyol to form 5,7,3,'4',5'-pentahydroxyflavanone and 3',5'-hydroxylation of dihydrokaempferol and dihydroquercetin to form dihydromyricetin. The protein is Flavonoid 3',5'-hydroxylase (CYP75A2) of Solanum melongena (Eggplant).